The following is a 1143-amino-acid chain: Condensin-2 complex subunit G2 (1143 aa).

Phosphoserine is present on S30. An HEAT repeat occupies L460 to C498. T805 and T1119 each carry phosphothreonine.

Component of the condensin-2 complex, which contains the SMC2 and SMC4 heterodimer, and 3 non SMC subunits that probably regulate the complex: NCAPH2, NCAPD3 and NCAPG2.

Its subcellular location is the nucleus. Its function is as follows. Regulatory subunit of the condensin-2 complex, a complex which establishes mitotic chromosome architecture and is involved in physical rigidity of the chromatid axis. The sequence is that of Condensin-2 complex subunit G2 (NCAPG2) from Homo sapiens (Human).